The following is a 278-amino-acid chain: Msm operon regulatory protein (278 aa).

The HTH araC/xylS-type domain occupies 176–274 (NQVKKIIHSQ…GKSPSKFRKE (99 aa)). DNA-binding regions (H-T-H motif) lie at residues 193–214 (NDIA…RKST) and 241–264 (IAEI…KNYF).

Regulatory protein for the msm operon for multiple sugar metabolism. Activates the transcription of the msmEFGK, aga, dexB and gftA genes. This Streptococcus mutans serotype c (strain ATCC 700610 / UA159) protein is Msm operon regulatory protein (msmR).